Reading from the N-terminus, the 247-residue chain is ATP synthase subunit a, chloroplastic (247 aa).

Helical transmembrane passes span Q38–V58, V95–L115, I134–T154, L199–L219, and G220–G240.

Belongs to the ATPase A chain family. In terms of assembly, F-type ATPases have 2 components, CF(1) - the catalytic core - and CF(0) - the membrane proton channel. CF(1) has five subunits: alpha(3), beta(3), gamma(1), delta(1), epsilon(1). CF(0) has four main subunits: a, b, b' and c.

The protein localises to the plastid. The protein resides in the chloroplast thylakoid membrane. Functionally, key component of the proton channel; it plays a direct role in the translocation of protons across the membrane. This chain is ATP synthase subunit a, chloroplastic, found in Panax ginseng (Korean ginseng).